The chain runs to 439 residues: DNA primase DnaG (439 aa).

The Toprim domain maps to 169 to 243 (DSIIVVEGRA…DIDYVARAPY (75 aa)). Mg(2+) is bound by residues Glu175, Asp217, and Asp219.

The protein belongs to the archaeal DnaG primase family. As to quaternary structure, forms a ternary complex with MCM helicase and DNA. The cofactor is Mg(2+).

It catalyses the reaction ssDNA + n NTP = ssDNA/pppN(pN)n-1 hybrid + (n-1) diphosphate.. Functionally, RNA polymerase that catalyzes the synthesis of short RNA molecules used as primers for DNA polymerase during DNA replication. The polypeptide is DNA primase DnaG (Methanococcus maripaludis (strain C7 / ATCC BAA-1331)).